We begin with the raw amino-acid sequence, 201 residues long: UPF0301 protein CE2927 (201 aa).

This sequence belongs to the UPF0301 (AlgH) family.

The chain is UPF0301 protein CE2927 from Corynebacterium efficiens (strain DSM 44549 / YS-314 / AJ 12310 / JCM 11189 / NBRC 100395).